The primary structure comprises 131 residues: Thrombocorticin (131 aa).

Cysteine 3 and cysteine 111 are joined by a disulfide. A disordered region spans residues 28–60 (RNESVEVKDSNGNTVSRGSGSSSSGGTFTVINM). Residues 37–54 (SNGNTVSRGSGSSSSGGT) show a composition bias toward low complexity. Residues 117–131 (DFNDVFVLITGLVRG) carry the Pseudodomain-swapping motif motif.

Functionally, binds to fucose and mannose in a calcium-dependent manner (in vitro). Acts as an agonist for human thrombopoietin receptor MPL (in vitro). Binding of sugar-moieties may promote the interaction with human MPL on the cell surface (in vitro). Catalyzes MPL dimerization and activation, and modulates internalization of the receptor (in vitro). Exhibits proliferation activity in murine recombinant Ba/F3 cells expressing human MPL (Ba/F3-huMPL) (in vitro). Induces phosphorylation of STAT5 in recombinant Ba/F3-huMPL cells, possibly by stimulating MPL on the cell surface to transduce signals via Jak/STAT signaling pathway (in vitro). Does not aggregate rabbit erythrocytes, indicating absent lectin-like agglutination activity (in vitro). The sequence is that of Thrombocorticin from Corticium sp. (Marine sponge).